The primary structure comprises 260 residues: Uridylate kinase (260 aa).

29–32 (KLSG) contacts ATP. Positions 37–42 (GDLGYG) are involved in allosteric activation by GTP. Glycine 71 provides a ligand contact to UMP. Glycine 72 and arginine 76 together coordinate ATP. UMP contacts are provided by residues aspartate 91 and 152 to 159 (SGNPFFTT). The ATP site is built by threonine 179, tyrosine 185, and aspartate 188.

This sequence belongs to the UMP kinase family. As to quaternary structure, homohexamer.

Its subcellular location is the cytoplasm. The enzyme catalyses UMP + ATP = UDP + ADP. Its pathway is pyrimidine metabolism; CTP biosynthesis via de novo pathway; UDP from UMP (UMPK route): step 1/1. With respect to regulation, allosterically activated by GTP. Inhibited by UTP. Catalyzes the reversible phosphorylation of UMP to UDP. This is Uridylate kinase from Synechocystis sp. (strain ATCC 27184 / PCC 6803 / Kazusa).